A 289-amino-acid polypeptide reads, in one-letter code: Nucleotide-binding protein COPRO5265_0725 (289 aa).

9–16 (GLSGAGKS) serves as a coordination point for ATP. Residue 59 to 62 (DSRS) participates in GTP binding.

Belongs to the RapZ-like family.

In terms of biological role, displays ATPase and GTPase activities. In Coprothermobacter proteolyticus (strain ATCC 35245 / DSM 5265 / OCM 4 / BT), this protein is Nucleotide-binding protein COPRO5265_0725.